The sequence spans 869 residues: Valine--tRNA ligase (869 aa).

The 'HIGH' region motif lies at 47–57 (PYPTGNFHIGN). A 'KMSKS' region motif is present at residues 521–525 (KMSKS). Residue Lys-524 participates in ATP binding.

The protein belongs to the class-I aminoacyl-tRNA synthetase family. ValS type 2 subfamily.

It localises to the cytoplasm. It carries out the reaction tRNA(Val) + L-valine + ATP = L-valyl-tRNA(Val) + AMP + diphosphate. Catalyzes the attachment of valine to tRNA(Val). As ValRS can inadvertently accommodate and process structurally similar amino acids such as threonine, to avoid such errors, it has a 'posttransfer' editing activity that hydrolyzes mischarged Thr-tRNA(Val) in a tRNA-dependent manner. This chain is Valine--tRNA ligase, found in Methanosarcina mazei (strain ATCC BAA-159 / DSM 3647 / Goe1 / Go1 / JCM 11833 / OCM 88) (Methanosarcina frisia).